A 259-amino-acid polypeptide reads, in one-letter code: Ras-related protein Rab-34 (259 aa).

Methionine 1 is subject to N-acetylmethionine. The GTP site is built by serine 62, valine 63, glycine 64, lysine 65, threonine 66, aspartate 78, tyrosine 81, and threonine 84. Threonine 66 contacts Mg(2+). Positions 71–89 match the Switch 1 motif; sequence RFCKDTFDKNYKATIGVDF. Mg(2+) contacts are provided by threonine 84 and aspartate 107. Residues 108 to 127 carry the Switch 2 motif; sequence TAGQERFKCIASTYYRGAQA. Residues glycine 110, lysine 167, aspartate 169, and serine 198 each contribute to the GTP site. 2 positions are modified to phosphoserine: serine 241 and serine 244. S-geranylgeranyl cysteine attachment occurs at residues cysteine 257 and cysteine 258.

It belongs to the small GTPase superfamily. Rab family. As to quaternary structure, interacts with RILP. The GTP-bound form interacts with REP15. The cofactor is Mg(2+).

The protein localises to the cytoplasm. The protein resides in the golgi apparatus. Its subcellular location is the cytoplasmic vesicle. It is found in the phagosome. It localises to the phagosome membrane. The protein localises to the cell projection. The protein resides in the cilium. Its subcellular location is the cytoskeleton. It is found in the microtubule organizing center. It localises to the centrosome. The protein localises to the centriole. The catalysed reaction is GTP + H2O = GDP + phosphate + H(+). With respect to regulation, regulated by guanine nucleotide exchange factors (GEFs) which promote the exchange of bound GDP for free GTP. Regulated by GTPase activating proteins (GAPs) which increase the GTP hydrolysis activity. Inhibited by GDP dissociation inhibitors (GDIs). Functionally, the small GTPases Rab are key regulators of intracellular membrane trafficking, from the formation of transport vesicles to their fusion with membranes. Rabs cycle between an inactive GDP-bound form and an active GTP-bound form that is able to recruit to membranes different sets of downstream effectors directly responsible for vesicle formation, movement, tethering and fusion. RAB34 transports protein involved in the redistribution of lysosomes to the peri-Golgi region. Plays a role in the maturation of phagosomes that engulf pathogens, such as S.aureus and M.tuberculosis. Plays a role in the fusion of phagosomes with lysosomes. Involved in ciliogenesis. In particular, it is required for early steps of the intracellular cilium assembly pathway initiated by trafficking and docking of ciliary vesicles to the centrioles in the cytoplasm, followed by axoneme formation in the cytoplasm. After axoneme elongation, the centrioles migrate close to the cell surface so that ciliary vesicles can fuse with the plasma membrane to expose cilia to the extracellular space. It seems dispensable for ciliogenesis via the extracellular pathway where cilium assembly begins after migration and docking of the centriole to the plasma membrane. Also acts as a positive regulator of hedgehog signaling and regulates ciliary function. This Homo sapiens (Human) protein is Ras-related protein Rab-34.